Here is a 148-residue protein sequence, read N- to C-terminus: Large ribosomal subunit protein bL9 (148 aa).

Belongs to the bacterial ribosomal protein bL9 family.

In terms of biological role, binds to the 23S rRNA. This is Large ribosomal subunit protein bL9 from Staphylococcus aureus (strain bovine RF122 / ET3-1).